Reading from the N-terminus, the 212-residue chain is Uridine kinase (212 aa).

Position 13–20 (13–20 (GASASGKS)) interacts with ATP.

The protein belongs to the uridine kinase family.

The protein localises to the cytoplasm. The catalysed reaction is uridine + ATP = UMP + ADP + H(+). The enzyme catalyses cytidine + ATP = CMP + ADP + H(+). Its pathway is pyrimidine metabolism; CTP biosynthesis via salvage pathway; CTP from cytidine: step 1/3. The protein operates within pyrimidine metabolism; UMP biosynthesis via salvage pathway; UMP from uridine: step 1/1. This Shewanella putrefaciens (strain CN-32 / ATCC BAA-453) protein is Uridine kinase.